The sequence spans 537 residues: 2-succinyl-5-enolpyruvyl-6-hydroxy-3-cyclohexene-1-carboxylate synthase (537 aa).

This sequence belongs to the TPP enzyme family. MenD subfamily. In terms of assembly, homodimer. Requires Mg(2+) as cofactor. Mn(2+) serves as cofactor. Thiamine diphosphate is required as a cofactor.

It catalyses the reaction isochorismate + 2-oxoglutarate + H(+) = 5-enolpyruvoyl-6-hydroxy-2-succinyl-cyclohex-3-ene-1-carboxylate + CO2. It functions in the pathway quinol/quinone metabolism; 1,4-dihydroxy-2-naphthoate biosynthesis; 1,4-dihydroxy-2-naphthoate from chorismate: step 2/7. Its pathway is quinol/quinone metabolism; menaquinone biosynthesis. Functionally, catalyzes the thiamine diphosphate-dependent decarboxylation of 2-oxoglutarate and the subsequent addition of the resulting succinic semialdehyde-thiamine pyrophosphate anion to isochorismate to yield 2-succinyl-5-enolpyruvyl-6-hydroxy-3-cyclohexene-1-carboxylate (SEPHCHC). The polypeptide is 2-succinyl-5-enolpyruvyl-6-hydroxy-3-cyclohexene-1-carboxylate synthase (Dechloromonas aromatica (strain RCB)).